The chain runs to 167 residues: NAD(P)H-quinone oxidoreductase subunit I, chloroplastic (167 aa).

4Fe-4S ferredoxin-type domains follow at residues 55–84 (GRIH…VDWK) and 95–124 (LNYS…MTEE). The [4Fe-4S] cluster site is built by cysteine 64, cysteine 67, cysteine 70, cysteine 74, cysteine 104, cysteine 107, cysteine 110, and cysteine 114.

It belongs to the complex I 23 kDa subunit family. NDH is composed of at least 16 different subunits, 5 of which are encoded in the nucleus. It depends on [4Fe-4S] cluster as a cofactor.

It localises to the plastid. Its subcellular location is the chloroplast thylakoid membrane. It catalyses the reaction a plastoquinone + NADH + (n+1) H(+)(in) = a plastoquinol + NAD(+) + n H(+)(out). It carries out the reaction a plastoquinone + NADPH + (n+1) H(+)(in) = a plastoquinol + NADP(+) + n H(+)(out). NDH shuttles electrons from NAD(P)H:plastoquinone, via FMN and iron-sulfur (Fe-S) centers, to quinones in the photosynthetic chain and possibly in a chloroplast respiratory chain. The immediate electron acceptor for the enzyme in this species is believed to be plastoquinone. Couples the redox reaction to proton translocation, and thus conserves the redox energy in a proton gradient. This is NAD(P)H-quinone oxidoreductase subunit I, chloroplastic from Panax ginseng (Korean ginseng).